Reading from the N-terminus, the 125-residue chain is Holo-[acyl-carrier-protein] synthase (125 aa).

2 residues coordinate Mg(2+): Asp7 and Glu56.

It belongs to the P-Pant transferase superfamily. AcpS family. It depends on Mg(2+) as a cofactor.

The protein localises to the cytoplasm. It catalyses the reaction apo-[ACP] + CoA = holo-[ACP] + adenosine 3',5'-bisphosphate + H(+). Its function is as follows. Transfers the 4'-phosphopantetheine moiety from coenzyme A to a Ser of acyl-carrier-protein. The polypeptide is Holo-[acyl-carrier-protein] synthase (Chlamydia muridarum (strain MoPn / Nigg)).